Reading from the N-terminus, the 134-residue chain is Small ribosomal subunit protein uS11 (134 aa).

The segment at 1–21 is disordered; sequence MPPKSRQGAGRKVRRKEKKNV. The span at 9 to 21 shows a compositional bias: basic residues; the sequence is AGRKVRRKEKKNV.

The protein belongs to the universal ribosomal protein uS11 family. As to quaternary structure, part of the 30S ribosomal subunit. Interacts with proteins S7 and S18. Binds to IF-3.

Its function is as follows. Located on the platform of the 30S subunit, it bridges several disparate RNA helices of the 16S rRNA. Forms part of the Shine-Dalgarno cleft in the 70S ribosome. This chain is Small ribosomal subunit protein uS11, found in Thermobifida fusca (strain YX).